The sequence spans 198 residues: Angiopoietin-like protein 8 (198 aa).

An N-terminal signal peptide occupies residues 1 to 21 (MPVPALCLLWALAMVTRPASA).

The protein belongs to the ANGPTL8 family. As to quaternary structure, interacts with ANGPTL3. Proteolytically cleaved at the N-terminus. Predominantly expressed in liver. Also expressed in adipose tissues.

It is found in the secreted. In terms of biological role, hormone that acts as a blood lipid regulator by regulating serum triglyceride levels. May be involved in the metabolic transition between fasting and refeeding: required to direct fatty acids to adipose tissue for storage in the fed state. The protein is Angiopoietin-like protein 8 of Homo sapiens (Human).